We begin with the raw amino-acid sequence, 552 residues long: Asparagine--tRNA ligase, cytoplasmic (552 aa).

Positions 1–23 (MSQVYVNEKTGADSTDVSGSEQQ) are disordered. The segment covering 12 to 23 (ADSTDVSGSEQQ) has biased composition (polar residues).

This sequence belongs to the class-II aminoacyl-tRNA synthetase family.

It localises to the cytoplasm. The enzyme catalyses tRNA(Asn) + L-asparagine + ATP = L-asparaginyl-tRNA(Asn) + AMP + diphosphate + H(+). The sequence is that of Asparagine--tRNA ligase, cytoplasmic (DED81) from Debaryomyces hansenii (strain ATCC 36239 / CBS 767 / BCRC 21394 / JCM 1990 / NBRC 0083 / IGC 2968) (Yeast).